We begin with the raw amino-acid sequence, 286 residues long: Homeobox-leucine zipper protein ATHB-20 (286 aa).

A DNA-binding region (homeobox) is located at residues 84 to 143; it reads LGEKKKRLQLEQVKALEKSFELGNKLEPERKIQLAKALGMQPRQIAIWFQNRRARWKTRQ. The leucine-zipper stretch occupies residues 144 to 179; the sequence is LERDYDSLKKQFESLKSDNASLLAYNKKLLAEVMAL.

The protein belongs to the HD-ZIP homeobox family. Class I subfamily. In terms of tissue distribution, widely expressed.

It is found in the nucleus. Functionally, probable transcription factor. This Arabidopsis thaliana (Mouse-ear cress) protein is Homeobox-leucine zipper protein ATHB-20 (ATHB-20).